A 298-amino-acid chain; its full sequence is Leucine-rich repeat-containing protein 55 (298 aa).

An N-terminal signal peptide occupies residues 1–34; it reads MGDTWAQLPWPGPPHSALLLVFFLLAAGVMHSDA. The region spanning 35 to 65 is the LRRNT domain; the sequence is GTSCPVLCTCRNQVVDCSNQRLFSVPPDLPM. 2 disulfide bridges follow: Cys38–Cys44 and Cys42–Cys51. LRR repeat units follow at residues 66–87, 90–111, 114–135, 138–160, and 163–186; these read DTRN…YLTC, ELRV…LFLH, RLAH…MFRE, GLVH…AFQG, and HLRD…EGLP. Residues 196-251 form the LRRCT domain; the sequence is NPWVCGCTMEPLLKWLRNRIQRCTADSQLAECRGPPEVEGAPLFSLTEESFKACHL. 2 cysteine pairs are disulfide-bonded: Cys200–Cys227 and Cys202–Cys249. Residues 259-279 traverse the membrane as a helical segment; that stretch reads LFIAFVGFVVSIASVATNFLL.

Interacts with KCNMA1.

It is found in the cell membrane. Auxiliary protein of the large-conductance, voltage and calcium-activated potassium channel (BK alpha). Modulates gating properties by producing a marked shift in the BK channel's voltage dependence of activation in the hyperpolarizing direction, and in the absence of calcium. The polypeptide is Leucine-rich repeat-containing protein 55 (Lrrc55) (Mus musculus (Mouse)).